The following is a 1126-amino-acid chain: Carbamoyl phosphate synthase large chain (1126 aa).

Positions M1–D402 are carboxyphosphate synthetic domain. R129, R169, G175, G176, E208, I210, E215, G241, V242, H243, Q285, and E299 together coordinate ATP. One can recognise an ATP-grasp 1 domain in the interval K133–L328. Positions 285, 299, and 301 each coordinate Mg(2+). Residues Q285, E299, and N301 each contribute to the Mn(2+) site. The tract at residues K403 to T551 is oligomerization domain. Residues E552–Y962 are carbamoyl phosphate synthetic domain. Residues G681 to V881 form the ATP-grasp 2 domain. ATP is bound by residues R717, K765, L767, E772, G797, V798, H799, S800, Q840, and E852. Residues Q840, E852, and N854 each contribute to the Mg(2+) site. Positions 840, 852, and 854 each coordinate Mn(2+). Residues E963 to D1126 form an allosteric domain region. One can recognise an MGS-like domain in the interval G964–D1126.

Belongs to the CarB family. Composed of two chains; the small (or glutamine) chain promotes the hydrolysis of glutamine to ammonia, which is used by the large (or ammonia) chain to synthesize carbamoyl phosphate. Tetramer of heterodimers (alpha,beta)4. The cofactor is Mg(2+). Mn(2+) serves as cofactor.

The enzyme catalyses hydrogencarbonate + L-glutamine + 2 ATP + H2O = carbamoyl phosphate + L-glutamate + 2 ADP + phosphate + 2 H(+). The catalysed reaction is hydrogencarbonate + NH4(+) + 2 ATP = carbamoyl phosphate + 2 ADP + phosphate + 2 H(+). Its pathway is amino-acid biosynthesis; L-arginine biosynthesis; carbamoyl phosphate from bicarbonate: step 1/1. It functions in the pathway pyrimidine metabolism; UMP biosynthesis via de novo pathway; (S)-dihydroorotate from bicarbonate: step 1/3. Functionally, large subunit of the glutamine-dependent carbamoyl phosphate synthetase (CPSase). CPSase catalyzes the formation of carbamoyl phosphate from the ammonia moiety of glutamine, carbonate, and phosphate donated by ATP, constituting the first step of 2 biosynthetic pathways, one leading to arginine and/or urea and the other to pyrimidine nucleotides. The large subunit (synthetase) binds the substrates ammonia (free or transferred from glutamine from the small subunit), hydrogencarbonate and ATP and carries out an ATP-coupled ligase reaction, activating hydrogencarbonate by forming carboxy phosphate which reacts with ammonia to form carbamoyl phosphate. This Bifidobacterium adolescentis (strain ATCC 15703 / DSM 20083 / NCTC 11814 / E194a) protein is Carbamoyl phosphate synthase large chain.